We begin with the raw amino-acid sequence, 644 residues long: Exoribonuclease 2 (644 aa).

The RNB domain maps to 189 to 516 (REDLTALDFV…NHRLLKAVIK (328 aa)). An S1 motif domain is found at 561–643 (DTRFAAEIVD…ETRSIIARPV (83 aa)).

It belongs to the RNR ribonuclease family. RNase II subfamily.

Its subcellular location is the cytoplasm. It carries out the reaction Exonucleolytic cleavage in the 3'- to 5'-direction to yield nucleoside 5'-phosphates.. In terms of biological role, involved in mRNA degradation. Hydrolyzes single-stranded polyribonucleotides processively in the 3' to 5' direction. The protein is Exoribonuclease 2 of Escherichia coli (strain SMS-3-5 / SECEC).